The chain runs to 331 residues: Cathepsin 7 (331 aa).

Residues 1-17 (MTPTVFLSILCLGVALA) form the signal peptide. Positions 18–111 (APAPDYNLDA…GKHIQKRNPK (94 aa)) are cleaved as a propeptide — activation peptide. Residues 33–50 (KRSNDRTYSPEEEKQRRA) carry the Nuclear localization signal motif. N-linked (GlcNAc...) asparagine glycosylation occurs at Asn72. Disulfide bonds link Cys133/Cys176, Cys167/Cys209, and Cys267/Cys320. Residue Cys136 is part of the active site. Active-site residues include His274 and Asn298.

The protein belongs to the peptidase C1 family. Expressed in placenta. Expressed in parietal and spiral artery-associated trophoblast giant cells, most abundantly during the phase of trophoblast invasion. From 14.5 dpc onwards, expressed at lower levels in labyrinth trophoblast cells. Expressed in trophoblast stem cells. Expressed in heart, liver and testis.

The protein resides in the endosome. The protein localises to the lysosome. It localises to the cytoplasm. Its subcellular location is the perinuclear region. It is found in the golgi apparatus. The protein resides in the nucleus. The protein localises to the secreted. It localises to the extracellular space. Involved in trophoblast cell proliferation and differentiation probably by affecting mitotic cell cycle progression. Proteolytic activity and nuclear localization are essential for its role in cell cycle progression. This Mus musculus (Mouse) protein is Cathepsin 7.